Reading from the N-terminus, the 209-residue chain is Orotate phosphoribosyltransferase (209 aa).

5-phospho-alpha-D-ribose 1-diphosphate-binding positions include arginine 96, lysine 100, histidine 102, and glutamate 122 to serine 130. Residue serine 126 coordinates orotate.

It belongs to the purine/pyrimidine phosphoribosyltransferase family. PyrE subfamily. As to quaternary structure, homodimer. It depends on Mg(2+) as a cofactor.

It carries out the reaction orotidine 5'-phosphate + diphosphate = orotate + 5-phospho-alpha-D-ribose 1-diphosphate. It functions in the pathway pyrimidine metabolism; UMP biosynthesis via de novo pathway; UMP from orotate: step 1/2. Catalyzes the transfer of a ribosyl phosphate group from 5-phosphoribose 1-diphosphate to orotate, leading to the formation of orotidine monophosphate (OMP). The chain is Orotate phosphoribosyltransferase from Listeria innocua serovar 6a (strain ATCC BAA-680 / CLIP 11262).